The chain runs to 208 residues: Imidazoleglycerol-phosphate dehydratase (208 aa).

It belongs to the imidazoleglycerol-phosphate dehydratase family.

It localises to the cytoplasm. It carries out the reaction D-erythro-1-(imidazol-4-yl)glycerol 3-phosphate = 3-(imidazol-4-yl)-2-oxopropyl phosphate + H2O. The protein operates within amino-acid biosynthesis; L-histidine biosynthesis; L-histidine from 5-phospho-alpha-D-ribose 1-diphosphate: step 6/9. The sequence is that of Imidazoleglycerol-phosphate dehydratase from Symbiobacterium thermophilum (strain DSM 24528 / JCM 14929 / IAM 14863 / T).